Reading from the N-terminus, the 481-residue chain is Adenosylhomocysteinase (481 aa).

Positions 65, 140, and 200 each coordinate substrate. 201-203 (TTT) provides a ligand contact to NAD(+). Substrate is bound by residues Lys-230 and Asp-234. NAD(+) contacts are provided by residues Asn-235, 264–269 (GYGDVG), Glu-287, Asn-322, 343–345 (IGH), and Asn-393.

It belongs to the adenosylhomocysteinase family. The cofactor is NAD(+).

The protein resides in the cytoplasm. It carries out the reaction S-adenosyl-L-homocysteine + H2O = L-homocysteine + adenosine. It participates in amino-acid biosynthesis; L-homocysteine biosynthesis; L-homocysteine from S-adenosyl-L-homocysteine: step 1/1. Its function is as follows. May play a key role in the regulation of the intracellular concentration of adenosylhomocysteine. This chain is Adenosylhomocysteinase, found in Polynucleobacter asymbioticus (strain DSM 18221 / CIP 109841 / QLW-P1DMWA-1) (Polynucleobacter necessarius subsp. asymbioticus).